A 506-amino-acid polypeptide reads, in one-letter code: ATP synthase subunit alpha, chloroplastic (506 aa).

170-177 (GDRQTGKT) is a binding site for ATP.

It belongs to the ATPase alpha/beta chains family. F-type ATPases have 2 components, CF(1) - the catalytic core - and CF(0) - the membrane proton channel. CF(1) has five subunits: alpha(3), beta(3), gamma(1), delta(1), epsilon(1). CF(0) has four main subunits: a, b, b' and c.

It localises to the plastid. The protein localises to the chloroplast thylakoid membrane. The catalysed reaction is ATP + H2O + 4 H(+)(in) = ADP + phosphate + 5 H(+)(out). In terms of biological role, produces ATP from ADP in the presence of a proton gradient across the membrane. The alpha chain is a regulatory subunit. The polypeptide is ATP synthase subunit alpha, chloroplastic (Euglena gracilis).